The sequence spans 449 residues: GTPase Der (449 aa).

EngA-type G domains follow at residues 2–169 (FTVA…QLPP) and 180–355 (VRFC…EQLT). Residues 8–15 (GRPNVGKS), 55–59 (DTGGL), 118–121 (NKSE), 186–193 (GKPNVGKS), 233–237 (DTAGI), and 298–301 (NKWD) each bind GTP. The 85-residue stretch at 356–440 (KKISTSLLND…PITLYFKSKN (85 aa)) folds into the KH-like domain.

Belongs to the TRAFAC class TrmE-Era-EngA-EngB-Septin-like GTPase superfamily. EngA (Der) GTPase family. Associates with the 50S ribosomal subunit.

In terms of biological role, GTPase that plays an essential role in the late steps of ribosome biogenesis. This is GTPase Der from Mycoplasma pneumoniae (strain ATCC 29342 / M129 / Subtype 1) (Mycoplasmoides pneumoniae).